A 607-amino-acid chain; its full sequence is Arginine decarboxylase (607 aa).

Lys104 bears the N6-(pyridoxal phosphate)lysine mark. A substrate-binding site is contributed by Leu290–Tyr300.

The protein belongs to the Orn/Lys/Arg decarboxylase class-II family. SpeA subfamily. Pyridoxal 5'-phosphate is required as a cofactor. It depends on Mg(2+) as a cofactor.

It catalyses the reaction L-arginine + H(+) = agmatine + CO2. It functions in the pathway amine and polyamine biosynthesis; agmatine biosynthesis; agmatine from L-arginine: step 1/1. The protein is Arginine decarboxylase (SPE1) of Avena sativa (Oat).